The chain runs to 210 residues: Scoloptoxin SSD552 (210 aa).

An N-terminal signal peptide occupies residues 1–23; sequence MNILLSSTLFVLLMFQIIGSGMG.

In terms of processing, contains 3 disulfide bonds. As to expression, expressed by the venom gland.

It is found in the secreted. In Scolopendra dehaani (Thai centipede), this protein is Scoloptoxin SSD552.